The sequence spans 197 residues: Ribonuclease HII (197 aa).

The region spanning 3–192 is the RNase H type-2 domain; that stretch reads QLIAGVDEVG…VQLSLMQRGG (190 aa). A divalent metal cation is bound by residues Asp-9, Glu-10, and Asp-101.

It belongs to the RNase HII family. Requires Mn(2+) as cofactor. It depends on Mg(2+) as a cofactor.

It localises to the cytoplasm. It carries out the reaction Endonucleolytic cleavage to 5'-phosphomonoester.. Endonuclease that specifically degrades the RNA of RNA-DNA hybrids. The polypeptide is Ribonuclease HII (Pseudoalteromonas atlantica (strain T6c / ATCC BAA-1087)).